A 169-amino-acid chain; its full sequence is Peptide deformylase (169 aa).

Fe cation-binding residues include Cys-91 and His-133. Glu-134 is an active-site residue. His-137 serves as a coordination point for Fe cation.

This sequence belongs to the polypeptide deformylase family. Fe(2+) serves as cofactor.

It catalyses the reaction N-terminal N-formyl-L-methionyl-[peptide] + H2O = N-terminal L-methionyl-[peptide] + formate. Removes the formyl group from the N-terminal Met of newly synthesized proteins. Requires at least a dipeptide for an efficient rate of reaction. N-terminal L-methionine is a prerequisite for activity but the enzyme has broad specificity at other positions. This Aliivibrio salmonicida (strain LFI1238) (Vibrio salmonicida (strain LFI1238)) protein is Peptide deformylase.